Here is a 233-residue protein sequence, read N- to C-terminus: Translation initiation factor 6 (233 aa).

It belongs to the eIF-6 family.

In terms of biological role, binds to the 50S ribosomal subunit and prevents its association with the 30S ribosomal subunit to form the 70S initiation complex. This is Translation initiation factor 6 from Aeropyrum pernix (strain ATCC 700893 / DSM 11879 / JCM 9820 / NBRC 100138 / K1).